We begin with the raw amino-acid sequence, 307 residues long: Elongation factor Ts (307 aa).

The interval Thr-79 to Val-82 is involved in Mg(2+) ion dislocation from EF-Tu.

The protein belongs to the EF-Ts family.

The protein resides in the cytoplasm. Its function is as follows. Associates with the EF-Tu.GDP complex and induces the exchange of GDP to GTP. It remains bound to the aminoacyl-tRNA.EF-Tu.GTP complex up to the GTP hydrolysis stage on the ribosome. In Bartonella quintana (strain Toulouse) (Rochalimaea quintana), this protein is Elongation factor Ts (tsf).